Here is a 1023-residue protein sequence, read N- to C-terminus: Sodium/potassium-transporting ATPase subunit alpha-1 (1023 aa).

A propeptide spanning residues 1 to 5 is cleaved from the precursor; the sequence is MGKGV. The segment covering 1-11 has biased composition (basic and acidic residues); sequence MGKGVGRDKYE. A disordered region spans residues 1-38; that stretch reads MGKGVGRDKYEPAAVSEHGDKKGKKAKKERDMDELKKE. Over 6 to 87 the chain is Cytoplasmic; it reads GRDKYEPAAV…NALTPPPTTP (82 aa). The residue at position 9 (Lys-9) is an N6-acetyllysine. Phosphotyrosine is present on Tyr-10. Phosphoserine; by PKC is present on Ser-16. The residue at position 21 (Lys-21) is an N6-acetyllysine. A compositionally biased stretch (basic and acidic residues) spans 28–38; that stretch reads KERDMDELKKE. Residues Ser-40 and Ser-47 each carry the phosphoserine modification. The interval 82–84 is phosphoinositide-3 kinase binding; it reads PPP. A helical membrane pass occupies residues 88–108; the sequence is EWVKFCRQLFGGFSMLLWIGA. Over 109 to 131 the chain is Extracellular; that stretch reads ILCFLAYGILAATEEDFDNDNLY. A helical membrane pass occupies residues 132–152; sequence LGVVLAAVVIITGCFSYYQEA. The Cytoplasmic segment spans residues 153 to 288; sequence KSSKIMESFK…GGQTPIAAEI (136 aa). A disordered region spans residues 216–235; sequence SSLTGESEPQTRSPDFTNEN. Residue Ser-228 is modified to Phosphoserine. Tyr-260 is modified (phosphotyrosine). A helical transmembrane segment spans residues 289–308; that stretch reads EHFIHIITGVAVFLGVSFFI. Residues 309-320 lie on the Extracellular side of the membrane; the sequence is LSLILEYTWLEA. Residues 321-338 form a helical membrane-spanning segment; sequence VIFLIGIIVANVPEGLLA. Over 339 to 772 the chain is Cytoplasmic; that stretch reads TVTVCLTLTA…EEGRLIFDNL (434 aa). The active-site 4-aspartylphosphate intermediate is Asp-376. Ser-452 and Ser-484 each carry phosphoserine. ATP is bound at residue Lys-487. A Phosphotyrosine modification is found at Tyr-542. The tract at residues 596-717 is mediates interaction with SCN7A; sequence RAAVPDAVGK…QGAIVAVTGD (122 aa). Lys-661 is subject to N6-succinyllysine. Phosphoserine occurs at positions 668 and 675. 2 residues coordinate Mg(2+): Asp-717 and Asp-721. The helical transmembrane segment at 773-792 threads the bilayer; sequence KKSIAYTLTSNIPEITPFLI. Residues 793–802 are Extracellular-facing; it reads FIIANIPLPL. The chain crosses the membrane as a helical span at residues 803–823; sequence GTVTILCIDLGTDMVPAISLA. Residues 824–843 lie on the Cytoplasmic side of the membrane; the sequence is YEQAESDIMKRQPRNPKTDK. Residues 844–866 form a helical membrane-spanning segment; the sequence is LVNERLISMAYGQIGMIQALGGF. Residues 867–918 are Extracellular-facing; sequence FTYFVILAENGFLPFHLLGIRVDWDDRWINDVEDSYGQQWTYEQRKIVEFTC. A helical transmembrane segment spans residues 919-938; sequence HTAFFVSIVVVQWADLVICK. Residues 939–951 are Cytoplasmic-facing; it reads TRRNSVFQQGMKN. Ser-943 is modified (phosphoserine; by PKA). A helical membrane pass occupies residues 952–970; sequence KILIFGLFEETALAAFLSY. The Extracellular segment spans residues 971-985; sequence CPGMGVALRMYPLKP. Residues 986–1006 traverse the membrane as a helical segment; that stretch reads TWWFCAFPYSLLIFVYDEIRK. Residues 1007–1023 are Cytoplasmic-facing; that stretch reads LIIRRRPGGWVEKETYY.

The protein belongs to the cation transport ATPase (P-type) (TC 3.A.3) family. Type IIC subfamily. The sodium/potassium-transporting ATPase is composed of a catalytic alpha subunit, an auxiliary non-catalytic beta subunit and an additional regulatory subunit. Interacts with regulatory subunit FXYD1. Interacts with regulatory subunit FXYD3. Interacts with SIK1. Interacts with SLC35G1 and STIM1. Interacts with CLN3; this interaction regulates the sodium/potassium-transporting ATPase complex localization at the plasma membrane. Interacts with SCN7A; activates ATP1A1 P-type sodium:potassium-exchanging transporter activity which indirectly signals to nearby neurons to regulate sodium homeostasis. In terms of processing, phosphorylation on Tyr-10 modulates pumping activity. Phosphorylation of Ser-943 by PKA modulates the response of ATP1A1 to PKC. Dephosphorylation by protein phosphatase 2A (PP2A) following increases in intracellular sodium, leading to increase catalytic activity. In terms of tissue distribution, expressed in endocardial endothelial cells.

The protein resides in the cell membrane. It localises to the basolateral cell membrane. It is found in the sarcolemma. The protein localises to the cell projection. Its subcellular location is the axon. The protein resides in the melanosome. It catalyses the reaction K(+)(out) + Na(+)(in) + ATP + H2O = K(+)(in) + Na(+)(out) + ADP + phosphate + H(+). Its function is as follows. This is the catalytic component of the active enzyme, which catalyzes the hydrolysis of ATP coupled with the exchange of sodium and potassium ions across the plasma membrane. This action creates the electrochemical gradient of sodium and potassium ions, providing the energy for active transport of various nutrients. Could also be part of an osmosensory signaling pathway that senses body-fluid sodium levels and controls salt intake behavior as well as voluntary water intake to regulate sodium homeostasis. The protein is Sodium/potassium-transporting ATPase subunit alpha-1 (ATP1A1) of Oryctolagus cuniculus (Rabbit).